The sequence spans 141 residues: Arsenate reductase (141 aa).

The active-site Nucleophile; cysteine thioarsenate intermediate is the C12.

It belongs to the ArsC family.

It carries out the reaction [glutaredoxin]-dithiol + arsenate + glutathione + H(+) = glutathionyl-S-S-[glutaredoxin] + arsenite + H2O. Involved in resistance to arsenate. Catalyzes the reduction of arsenate [As(V)] to arsenite [As(III)]. The protein is Arsenate reductase of Escherichia coli (strain K12).